The primary structure comprises 301 residues: 3-methyl-2-oxobutanoate hydroxymethyltransferase (301 aa).

The span at 1–12 (MAPSNLPESTTP) shows a compositional bias: polar residues. A disordered region spans residues 1–24 (MAPSNLPESTTPAEVPAPYGTGPA). Residues Asp-82 and Asp-121 each coordinate Mg(2+). 3-methyl-2-oxobutanoate is bound by residues 82-83 (DS), Asp-121, and Lys-151. Position 153 (Glu-153) interacts with Mg(2+). Glu-219 (proton acceptor) is an active-site residue.

Belongs to the PanB family. As to quaternary structure, homodecamer; pentamer of dimers. The cofactor is Mg(2+).

The protein localises to the cytoplasm. It catalyses the reaction 3-methyl-2-oxobutanoate + (6R)-5,10-methylene-5,6,7,8-tetrahydrofolate + H2O = 2-dehydropantoate + (6S)-5,6,7,8-tetrahydrofolate. Its pathway is cofactor biosynthesis; (R)-pantothenate biosynthesis; (R)-pantoate from 3-methyl-2-oxobutanoate: step 1/2. In terms of biological role, catalyzes the reversible reaction in which hydroxymethyl group from 5,10-methylenetetrahydrofolate is transferred onto alpha-ketoisovalerate to form ketopantoate. The sequence is that of 3-methyl-2-oxobutanoate hydroxymethyltransferase from Paenarthrobacter aurescens (strain TC1).